The primary structure comprises 298 residues: ATP synthase gamma chain (298 aa).

It belongs to the ATPase gamma chain family. In terms of assembly, F-type ATPases have 2 components, CF(1) - the catalytic core - and CF(0) - the membrane proton channel. CF(1) has five subunits: alpha(3), beta(3), gamma(1), delta(1), epsilon(1). CF(0) has three main subunits: a, b and c.

The protein localises to the cell inner membrane. In terms of biological role, produces ATP from ADP in the presence of a proton gradient across the membrane. The gamma chain is believed to be important in regulating ATPase activity and the flow of protons through the CF(0) complex. The protein is ATP synthase gamma chain of Bacteroides thetaiotaomicron (strain ATCC 29148 / DSM 2079 / JCM 5827 / CCUG 10774 / NCTC 10582 / VPI-5482 / E50).